The sequence spans 132 residues: MCDAFVGTWKLVSSENFDDYMKEVGVGFATRKVAGMAKPNLIISVEGDLVVIRSESTFKNTEISFKLGVEFDEITPDDRKVKSIITLDGGVLVHVQKWDGKSTTIKKRRDGDKLVVECVMKGVTSTRVYERA.

The residue at position 2 (cysteine 2) is an N-acetylcysteine. At serine 13 the chain carries Phosphoserine. Tyrosine 20 is modified (phosphotyrosine; by Tyr-kinases). The short motif at 22–32 is the Nuclear localization signal element; that stretch reads KEVGVGFATRK. 127–129 lines the a fatty acid pocket; that stretch reads RVY.

It belongs to the calycin superfamily. Fatty-acid binding protein (FABP) family. As to quaternary structure, monomer. Homodimer. Interacts with PPARG.

It localises to the cytoplasm. It is found in the nucleus. In terms of biological role, lipid transport protein in adipocytes. Binds both long chain fatty acids and retinoic acid. Delivers long-chain fatty acids and retinoic acid to their cognate receptors in the nucleus. In Rattus norvegicus (Rat), this protein is Fatty acid-binding protein, adipocyte (Fabp4).